Consider the following 390-residue polypeptide: Ribonuclease D (390 aa).

In terms of domain architecture, 3'-5' exonuclease spans 7–173; that stretch reads ITDSATLAAL…TLFPMLLKEL (167 aa). In terms of domain architecture, HRDC spans 212–293; it reads KADILGRLKA…ENAEALRPEE (82 aa).

It belongs to the RNase D family. Requires a divalent metal cation as cofactor.

It is found in the cytoplasm. The enzyme catalyses Exonucleolytic cleavage that removes extra residues from the 3'-terminus of tRNA to produce 5'-mononucleotides.. Functionally, exonuclease involved in the 3' processing of various precursor tRNAs. Initiates hydrolysis at the 3'-terminus of an RNA molecule and releases 5'-mononucleotides. The sequence is that of Ribonuclease D from Zymomonas mobilis subsp. mobilis (strain ATCC 31821 / ZM4 / CP4).